Reading from the N-terminus, the 321-residue chain is Lipoyl synthase (321 aa).

Residues C68, C73, C79, C94, C98, C101, and S308 each contribute to the [4Fe-4S] cluster site. Residues F80–T297 enclose the Radical SAM core domain.

The protein belongs to the radical SAM superfamily. Lipoyl synthase family. The cofactor is [4Fe-4S] cluster.

The protein localises to the cytoplasm. The catalysed reaction is [[Fe-S] cluster scaffold protein carrying a second [4Fe-4S](2+) cluster] + N(6)-octanoyl-L-lysyl-[protein] + 2 oxidized [2Fe-2S]-[ferredoxin] + 2 S-adenosyl-L-methionine + 4 H(+) = [[Fe-S] cluster scaffold protein] + N(6)-[(R)-dihydrolipoyl]-L-lysyl-[protein] + 4 Fe(3+) + 2 hydrogen sulfide + 2 5'-deoxyadenosine + 2 L-methionine + 2 reduced [2Fe-2S]-[ferredoxin]. It functions in the pathway protein modification; protein lipoylation via endogenous pathway; protein N(6)-(lipoyl)lysine from octanoyl-[acyl-carrier-protein]: step 2/2. Catalyzes the radical-mediated insertion of two sulfur atoms into the C-6 and C-8 positions of the octanoyl moiety bound to the lipoyl domains of lipoate-dependent enzymes, thereby converting the octanoylated domains into lipoylated derivatives. This Shewanella baltica (strain OS185) protein is Lipoyl synthase.